Consider the following 108-residue polypeptide: Cell wall protein PGA48 (108 aa).

Positions 1–17 (MFKFVIYLFTFIAFANA) are cleaved as a signal peptide. Asn-18, Asn-41, and Asn-77 each carry an N-linked (GlcNAc...) asparagine glycan. Residue Asn-84 is the site of GPI-anchor amidated asparagine attachment. The propeptide at 85–108 (GASKLNLRSLAGAGLVAAIFIAFI) is removed in mature form.

The protein belongs to the SED1 family. The GPI-anchor is attached to the protein in the endoplasmic reticulum and serves to target the protein to the cell surface. There, the glucosamine-inositol phospholipid moiety is cleaved off and the GPI-modified mannoprotein is covalently attached via its lipidless GPI glycan remnant to the 1,6-beta-glucan of the outer cell wall layer.

It localises to the secreted. The protein resides in the cell wall. The protein localises to the membrane. Cell wall protein that plays a role in adaptation and resistance to cell wall stress. The chain is Cell wall protein PGA48 (PGA48) from Candida albicans (strain SC5314 / ATCC MYA-2876) (Yeast).